Consider the following 79-residue polypeptide: Translational regulator CsrA (79 aa).

The protein belongs to the CsrA/RsmA family. In terms of assembly, homodimer; the beta-strands of each monomer intercalate to form a hydrophobic core, while the alpha-helices form wings that extend away from the core.

The protein localises to the cytoplasm. Functionally, a translational regulator that binds mRNA to regulate translation initiation and/or mRNA stability. Usually binds in the 5'-UTR at or near the Shine-Dalgarno sequence preventing ribosome-binding, thus repressing translation. Its main target seems to be the major flagellin gene, while its function is anatagonized by FliW. This chain is Translational regulator CsrA, found in Solidesulfovibrio magneticus (strain ATCC 700980 / DSM 13731 / RS-1) (Desulfovibrio magneticus).